A 711-amino-acid chain; its full sequence is Ribosomal RNA large subunit methyltransferase K/L (711 aa).

The THUMP domain maps to 43–154 (TLYRTLLWSR…RENLVISLDL (112 aa)).

This sequence belongs to the methyltransferase superfamily. RlmKL family.

Its subcellular location is the cytoplasm. It catalyses the reaction guanosine(2445) in 23S rRNA + S-adenosyl-L-methionine = N(2)-methylguanosine(2445) in 23S rRNA + S-adenosyl-L-homocysteine + H(+). The enzyme catalyses guanosine(2069) in 23S rRNA + S-adenosyl-L-methionine = N(2)-methylguanosine(2069) in 23S rRNA + S-adenosyl-L-homocysteine + H(+). Specifically methylates the guanine in position 2445 (m2G2445) and the guanine in position 2069 (m7G2069) of 23S rRNA. The sequence is that of Ribosomal RNA large subunit methyltransferase K/L from Haemophilus influenzae (strain PittGG).